The sequence spans 60 residues: Large ribosomal subunit protein bL33 (60 aa).

The protein belongs to the bacterial ribosomal protein bL33 family.

This chain is Large ribosomal subunit protein bL33, found in Chlorobium phaeobacteroides (strain DSM 266 / SMG 266 / 2430).